Consider the following 147-residue polypeptide: Ubiquitin-conjugating enzyme E2 D3 (147 aa).

Residues 1-147 (MALKRINKEL…SREWTQKYAM (147 aa)) form the UBC core domain. An intrachain disulfide couples Cys21 to Cys107. Residue Cys85 is the Glycyl thioester intermediate of the active site.

Belongs to the ubiquitin-conjugating enzyme family. As to quaternary structure, interacts with SCF (SKP1-CUL1-F-box protein) E3 ubiquitin ligase complex; when Cullin is neddylated, the interaction between the E2 and the SCF complex is strengthened. Interacts with DAPK3. Interacts with BRCA1; the DNA damage checkpoint promotes the association with BRCA1 after ionizing radiation. Interacts non-covalently with ubiquitin. Interacts with E3 ubiquitin-protein ligase CBLC. Interacts with UBTD1. Interacts with RIGI and RNF135; involved in RIGI ubiquitination and activation. Phosphorylated by AURKB.

The protein resides in the cell membrane. It localises to the endosome membrane. The catalysed reaction is S-ubiquitinyl-[E1 ubiquitin-activating enzyme]-L-cysteine + [E2 ubiquitin-conjugating enzyme]-L-cysteine = [E1 ubiquitin-activating enzyme]-L-cysteine + S-ubiquitinyl-[E2 ubiquitin-conjugating enzyme]-L-cysteine.. It catalyses the reaction S-ubiquitinyl-[E1 ubiquitin-activating enzyme]-L-cysteine + [acceptor protein]-L-lysine = [E1 ubiquitin-activating enzyme]-L-cysteine + N(6)-monoubiquitinyl-[acceptor protein]-L-lysine.. It participates in protein modification; protein ubiquitination. Accepts ubiquitin from the E1 complex and catalyzes its covalent attachment to other proteins. In vitro catalyzes 'Lys-11'-, as well as 'Lys-48'-linked polyubiquitination. Cooperates with the E2 CDC34 and the SCF(FBXW11) E3 ligase complex for the polyubiquitination of NFKBIA leading to its subsequent proteasomal degradation. Acts as an initiator E2, priming the phosphorylated NFKBIA target at positions 'Lys-21' and/or 'Lys-22' with a monoubiquitin. Ubiquitin chain elongation is then performed by CDC34, building ubiquitin chains from the UBE2D3-primed NFKBIA-linked ubiquitin. Also acts as an initiator E2, in conjunction with RNF8, for the priming of PCNA. Monoubiquitination of PCNA, and its subsequent polyubiquitination, are essential events in the operation of the DNA damage tolerance (DDT) pathway that is activated after DNA damage caused by UV or chemical agents during S-phase. Associates with the BRCA1/BARD1 E3 ligase complex to perform ubiquitination at DNA damage sites following ionizing radiation leading to DNA repair. Targets DAPK3 for ubiquitination which influences promyelocytic leukemia protein nuclear body (PML-NB) formation in the nucleus. In conjunction with the MDM2 and TOPORS E3 ligases, functions ubiquitination of p53/TP53. In conjunction with the CBL E3 ligase, targets EGFR for polyubiquitination at the plasma membrane as well as during its internalization and transport on endosomes. In conjunction with the STUB1 E3 quality control E3 ligase, ubiquitinates unfolded proteins to catalyze their immediate destruction. Together with RNF135, catalyzes the viral RNA-dependent 'Lys-63'-linked polyubiquitination of RIGI to activate the downstream signaling pathway that leads to interferon beta production. Together with ZNF598, catalyzes ubiquitination of 40S ribosomal proteins in response to ribosome collisions. In cooperation with the GATOR2 complex, catalyzes 'Lys-6'-linked ubiquitination of NPRL2. This Bos taurus (Bovine) protein is Ubiquitin-conjugating enzyme E2 D3 (UBE2D3).